The primary structure comprises 437 residues: Indole diterpene prenyltransferase anaPT (437 aa).

The interval 1-28 is disordered; that stretch reads MSPLSMQTDSVQGTAENKSLETNGTSND. L-tryptophan contacts are provided by residues 102–103 and E111; that span reads GF. R124, K208, Y210, Y282, Q355, Y357, Y422, and Y426 together coordinate dimethylallyl diphosphate.

Belongs to the tryptophan dimethylallyltransferase family.

The catalysed reaction is (R)-benzodiazepinedione + dimethylallyl diphosphate = (2R,3S,11R)-aszonalenin + diphosphate. The enzyme catalyses (S)-benzodiazepinedione + dimethylallyl diphosphate = (2R,3S,11S)-aszonalenin + diphosphate. It participates in alkaloid biosynthesis. Its function is as follows. Indole diterpene prenyltransferase; part of the gene cluster that mediates the biosynthesis of the prenylated pyrroloindoline diketopiperazine acetylaszonalenin. The first step in the pathway is the formation of (R)-benzodiazepinedione by condensation of tryptophan and anthranilic acid catalyzed by the non-ribosomal peptide synthetase anaPS. The prenyltransferase anaPT then converts (R)-benzodiazepinedione to aszonalenin in the presence of dimethylallyl diphosphate (DMAPP) via C3-prenylation. The last step in the biosynthesis of acetylaszonalenin via acetylation of aszonalenin at position N1 catalyzed by anaAT. This is Indole diterpene prenyltransferase anaPT from Neosartorya fischeri (strain ATCC 1020 / DSM 3700 / CBS 544.65 / FGSC A1164 / JCM 1740 / NRRL 181 / WB 181) (Aspergillus fischerianus).